The following is a 497-amino-acid chain: Mechanosensitive ion channel protein 1, mitochondrial (497 aa).

A mitochondrion-targeting transit peptide spans 1–86; the sequence is MAGVRLSLLK…RAFSSKSDDF (86 aa). Transmembrane regions (helical) follow at residues 152–172, 216–236, 238–258, 280–300, and 305–325; these read DVIV…VVMP, LVTF…TIAA, YFSP…LYRW, VLTL…MASA, and VAVQ…AFAA.

This sequence belongs to the MscS (TC 1.A.23) family.

The protein resides in the mitochondrion membrane. Mechanosensitive channel that opens in response to stretch forces in the membrane lipid bilayer. This is Mechanosensitive ion channel protein 1, mitochondrial (MSL1) from Arabidopsis thaliana (Mouse-ear cress).